A 364-amino-acid polypeptide reads, in one-letter code: Ribosomal RNA large subunit methyltransferase M (364 aa).

S-adenosyl-L-methionine-binding positions include serine 187, 220–223 (CPGG), aspartate 239, aspartate 259, and aspartate 276. The active-site Proton acceptor is lysine 305.

The protein belongs to the class I-like SAM-binding methyltransferase superfamily. RNA methyltransferase RlmE family. RlmM subfamily. Monomer.

The protein resides in the cytoplasm. It catalyses the reaction cytidine(2498) in 23S rRNA + S-adenosyl-L-methionine = 2'-O-methylcytidine(2498) in 23S rRNA + S-adenosyl-L-homocysteine + H(+). Its function is as follows. Catalyzes the 2'-O-methylation at nucleotide C2498 in 23S rRNA. This Aeromonas salmonicida (strain A449) protein is Ribosomal RNA large subunit methyltransferase M.